Reading from the N-terminus, the 315-residue chain is Lipoyl synthase (315 aa).

[4Fe-4S] cluster is bound by residues cysteine 62, cysteine 67, cysteine 73, cysteine 88, cysteine 92, cysteine 95, and serine 302. The region spanning 74 to 292 is the Radical SAM core domain; the sequence is FNHGTATFMI…KIALKLGFIR (219 aa).

It belongs to the radical SAM superfamily. Lipoyl synthase family. The cofactor is [4Fe-4S] cluster.

It is found in the cytoplasm. The catalysed reaction is [[Fe-S] cluster scaffold protein carrying a second [4Fe-4S](2+) cluster] + N(6)-octanoyl-L-lysyl-[protein] + 2 oxidized [2Fe-2S]-[ferredoxin] + 2 S-adenosyl-L-methionine + 4 H(+) = [[Fe-S] cluster scaffold protein] + N(6)-[(R)-dihydrolipoyl]-L-lysyl-[protein] + 4 Fe(3+) + 2 hydrogen sulfide + 2 5'-deoxyadenosine + 2 L-methionine + 2 reduced [2Fe-2S]-[ferredoxin]. Its pathway is protein modification; protein lipoylation via endogenous pathway; protein N(6)-(lipoyl)lysine from octanoyl-[acyl-carrier-protein]: step 2/2. Catalyzes the radical-mediated insertion of two sulfur atoms into the C-6 and C-8 positions of the octanoyl moiety bound to the lipoyl domains of lipoate-dependent enzymes, thereby converting the octanoylated domains into lipoylated derivatives. The protein is Lipoyl synthase of Vesicomyosocius okutanii subsp. Calyptogena okutanii (strain HA).